A 217-amino-acid polypeptide reads, in one-letter code: Uridylate kinase (217 aa).

An ATP-binding site is contributed by 6-10 (KISGR). Position 38 (glycine 38) interacts with UMP. Positions 39 and 43 each coordinate ATP. UMP-binding positions include aspartate 60 and 107-113 (FQPGQST). Residues asparagine 134, tyrosine 139, and aspartate 142 each contribute to the ATP site.

This sequence belongs to the UMP kinase family. In terms of assembly, homohexamer.

Its subcellular location is the cytoplasm. It carries out the reaction UMP + ATP = UDP + ADP. It functions in the pathway pyrimidine metabolism; CTP biosynthesis via de novo pathway; UDP from UMP (UMPK route): step 1/1. Inhibited by UTP. In terms of biological role, catalyzes the reversible phosphorylation of UMP to UDP. This chain is Uridylate kinase, found in Pyrobaculum arsenaticum (strain DSM 13514 / JCM 11321 / PZ6).